Here is a 143-residue protein sequence, read N- to C-terminus: uncharacterized protein (143 aa).

The interval 13-143 (SLQFPHHRPG…QDAAHQCRIQ (131 aa)) is disordered. A compositionally biased stretch (basic residues) spans 17–31 (PHHRPGLRRHRKNTT). Composition is skewed to basic and acidic residues over residues 35 to 48 (AAVDRPRRTRRGDA), 84 to 96 (DGREASRTAAEEK), and 112 to 133 (EKQHVGQDPDANGNHDDDDHAG). Low complexity predominate over residues 134–143 (QDAAHQCRIQ).

This is an uncharacterized protein from Homo sapiens (Human).